Here is a 278-residue protein sequence, read N- to C-terminus: Translation initiation factor IF-3, mitochondrial (278 aa).

Residues 1 to 31 (MAALFLKRLTLQTVKSENSCIRCFGKHILQK) constitute a mitochondrion transit peptide. Positions 249-278 (KAYKETQETQERDTLNKDHGNDKESNVLHQ) are disordered.

Belongs to the IF-3 family.

It is found in the mitochondrion. Functionally, IF-3 binds to the 28S ribosomal subunit and shifts the equilibrium between 55S ribosomes and their 39S and 28S subunits in favor of the free subunits, thus enhancing the availability of 28S subunits on which protein synthesis initiation begins. This is Translation initiation factor IF-3, mitochondrial (MTIF3) from Homo sapiens (Human).